The sequence spans 412 residues: L-cysteine:1D-myo-inositol 2-amino-2-deoxy-alpha-D-glucopyranoside ligase (412 aa).

C45 contacts Zn(2+). L-cysteinyl-5'-AMP contacts are provided by residues 45–48 (CGIT), T60, and 83–85 (NIT). Residues 47–57 (ITPYDAAHLGH) carry the 'HIGH' region motif. The short motif at 185 to 190 (ERGGDP) is the 'ERGGDP' region element. Position 225 (W225) interacts with L-cysteinyl-5'-AMP. Zn(2+) is bound at residue C229. Residue 247–249 (GDD) participates in L-cysteinyl-5'-AMP binding. Residue H254 coordinates Zn(2+). L-cysteinyl-5'-AMP is bound at residue V281. The short motif at 287 to 291 (KMSKS) is the 'KMSKS' region element.

Belongs to the class-I aminoacyl-tRNA synthetase family. MshC subfamily. In terms of assembly, monomer. Zn(2+) is required as a cofactor.

The enzyme catalyses 1D-myo-inositol 2-amino-2-deoxy-alpha-D-glucopyranoside + L-cysteine + ATP = 1D-myo-inositol 2-(L-cysteinylamino)-2-deoxy-alpha-D-glucopyranoside + AMP + diphosphate + H(+). Catalyzes the ATP-dependent condensation of GlcN-Ins and L-cysteine to form L-Cys-GlcN-Ins. This is L-cysteine:1D-myo-inositol 2-amino-2-deoxy-alpha-D-glucopyranoside ligase from Thermobifida fusca (strain YX).